The following is a 211-amino-acid chain: Ribonuclease HII (211 aa).

The 205-residue stretch at 1–205 (MRFGVDEAGK…CDDVLAAASQ (205 aa)) folds into the RNase H type-2 domain. Asp6, Glu7, and Asp100 together coordinate a divalent metal cation.

Belongs to the RNase HII family. Mn(2+) is required as a cofactor. It depends on Mg(2+) as a cofactor.

The protein localises to the cytoplasm. The catalysed reaction is Endonucleolytic cleavage to 5'-phosphomonoester.. In terms of biological role, endonuclease that specifically degrades the RNA of RNA-DNA hybrids. The protein is Ribonuclease HII of Haloarcula marismortui (strain ATCC 43049 / DSM 3752 / JCM 8966 / VKM B-1809) (Halobacterium marismortui).